A 377-amino-acid chain; its full sequence is Chaperone protein DnaJ (377 aa).

Residues 5–70 form the J domain; that stretch reads DFYEVLGVER…SKRAAYDQYG (66 aa). The CR-type zinc-finger motif lies at 136–214; it reads GTTVTIRVPT…CHGQGRVEEQ (79 aa). Zn(2+)-binding residues include Cys149, Cys152, Cys166, Cys169, Cys188, Cys191, Cys202, and Cys205. CXXCXGXG motif repeat units lie at residues 149–156, 166–173, 188–195, and 202–209; these read CKTCNGSG, CTTCGGIG, CPRCHGTG, and CGSCHGQG.

Belongs to the DnaJ family. As to quaternary structure, homodimer. Zn(2+) serves as cofactor.

It is found in the cytoplasm. Participates actively in the response to hyperosmotic and heat shock by preventing the aggregation of stress-denatured proteins and by disaggregating proteins, also in an autonomous, DnaK-independent fashion. Unfolded proteins bind initially to DnaJ; upon interaction with the DnaJ-bound protein, DnaK hydrolyzes its bound ATP, resulting in the formation of a stable complex. GrpE releases ADP from DnaK; ATP binding to DnaK triggers the release of the substrate protein, thus completing the reaction cycle. Several rounds of ATP-dependent interactions between DnaJ, DnaK and GrpE are required for fully efficient folding. Also involved, together with DnaK and GrpE, in the DNA replication of plasmids through activation of initiation proteins. The chain is Chaperone protein DnaJ from Pseudomonas paraeruginosa (strain DSM 24068 / PA7) (Pseudomonas aeruginosa (strain PA7)).